The following is a 314-amino-acid chain: (-)-isopiperitenone reductase (314 aa).

NADP(+) is bound at residue 10 to 33 (VTGANKGIGFEICRQLAEKGIIVI). Ser182 contacts substrate.

Belongs to the short-chain dehydrogenases/reductases (SDR) family.

It is found in the cytoplasm. It carries out the reaction (2R,5R)-isopulegone + NADP(+) = (6R)-isopiperitenone + NADPH + H(+). The protein operates within secondary metabolite biosynthesis; terpenoid biosynthesis. In terms of biological role, monoterpene synthase that catalyzes the specific reduction of the 1(2)-double bond of (-)-isopiperitenone to produce (+)-cis-isopulegone. Does not catalyze the reverse reaction. Unable to reduce (+)-pulegone, (+)-cis-isopulegone, (-)-menthone or the 1,2-double bond of (-)-carvone. Able to utilize NADH with 20% the efficiency of NADPH. The chain is (-)-isopiperitenone reductase from Mentha piperita (Peppermint).